The chain runs to 320 residues: ATP-dependent 6-phosphofructokinase (320 aa).

Glycine 12 contacts ATP. ADP-binding positions include arginine 22–arginine 26 and arginine 55–aspartate 60. ATP contacts are provided by residues arginine 73–phenylalanine 74 and glycine 103–serine 106. Mg(2+) is bound at residue aspartate 104. Threonine 126–aspartate 128 provides a ligand contact to substrate. The active-site Proton acceptor is the aspartate 128. Arginine 155 contributes to the ADP binding site. Substrate-binding positions include arginine 163 and methionine 170–arginine 172. ADP-binding positions include glycine 186 to glutamate 188, lysine 212, and lysine 214 to histidine 216. Substrate is bound by residues glutamate 223, arginine 244, and histidine 250–arginine 253.

This sequence belongs to the phosphofructokinase type A (PFKA) family. ATP-dependent PFK group I subfamily. Prokaryotic clade 'B1' sub-subfamily. Homotetramer. Mg(2+) serves as cofactor.

It is found in the cytoplasm. The enzyme catalyses beta-D-fructose 6-phosphate + ATP = beta-D-fructose 1,6-bisphosphate + ADP + H(+). The protein operates within carbohydrate degradation; glycolysis; D-glyceraldehyde 3-phosphate and glycerone phosphate from D-glucose: step 3/4. With respect to regulation, allosterically activated by ADP and other diphosphonucleosides, and allosterically inhibited by phosphoenolpyruvate. In terms of biological role, catalyzes the phosphorylation of D-fructose 6-phosphate to fructose 1,6-bisphosphate by ATP, the first committing step of glycolysis. The sequence is that of ATP-dependent 6-phosphofructokinase from Buchnera aphidicola subsp. Schizaphis graminum (strain Sg).